The primary structure comprises 338 residues: Ferredoxin--NADP reductase (338 aa).

FAD contacts are provided by T14, D33, Q41, Y46, V86, F120, D284, and T325.

The protein belongs to the ferredoxin--NADP reductase type 2 family. As to quaternary structure, homodimer. FAD is required as a cofactor.

It catalyses the reaction 2 reduced [2Fe-2S]-[ferredoxin] + NADP(+) + H(+) = 2 oxidized [2Fe-2S]-[ferredoxin] + NADPH. The sequence is that of Ferredoxin--NADP reductase from Pelagibacter ubique (strain HTCC1062).